We begin with the raw amino-acid sequence, 252 residues long: Hydroxyacylglutathione hydrolase (252 aa).

Histidine 54, histidine 56, aspartate 58, histidine 59, histidine 113, aspartate 132, and histidine 170 together coordinate Zn(2+).

Belongs to the metallo-beta-lactamase superfamily. Glyoxalase II family. As to quaternary structure, monomer. Zn(2+) serves as cofactor.

It catalyses the reaction an S-(2-hydroxyacyl)glutathione + H2O = a 2-hydroxy carboxylate + glutathione + H(+). It functions in the pathway secondary metabolite metabolism; methylglyoxal degradation; (R)-lactate from methylglyoxal: step 2/2. Its function is as follows. Thiolesterase that catalyzes the hydrolysis of S-D-lactoyl-glutathione to form glutathione and D-lactic acid. In Thermosynechococcus vestitus (strain NIES-2133 / IAM M-273 / BP-1), this protein is Hydroxyacylglutathione hydrolase.